The sequence spans 492 residues: Heat shock factor protein 4 (492 aa).

The DNA-binding element occupies 17 to 121; that stretch reads VPAFLGKLWA…QLLERVRRKV (105 aa). The segment at 129–203 is hydrophobic repeat HR-A/B; the sequence is GRWRPEDLGR…GPLQTGSSGA (75 aa). Residues 245–323 form an interactions with DUSP26, MAPK1 and MAPK2 region; that stretch reads LPETTLGLSS…ECDFCVTAPP (79 aa). Residues 250 to 286 are disordered; that stretch reads LGLSSSHRTRGPIISDIHEDSPSPDGTRLSPSSGGRR. A Glycyl lysine isopeptide (Lys-Gly) (interchain with G-Cter in SUMO) cross-link involves residue K294. At S299 the chain carries Phosphoserine. The segment at 337–378 is disordered; the sequence is KGNFSPEGPRNAQQPEPRGPREVPDRGTLGLDRGARSPENLL. Positions 365–390 are hydrophobic repeat HR-C; the sequence is LGLDRGARSPENLLPPMLLRAPPESV.

The protein belongs to the HSF family. In terms of assembly, homotrimer. Exhibits constitutive DNA binding and forms trimers even in the absence of stress. Interacts with ALKBH4, DUSP26, MAPK1, MAPK2, MAPK8 and MAP kinase p38. In terms of processing, phosphorylated mainly on serine residues. Phosphorylation on Ser-299 promotes sumoylation on Lys-294. Post-translationally, constitutively sumoylated. Sumoylation represses the transcriptional activity and is promoted by phosphorylation on Ser-299.

It localises to the nucleus. Heat-shock transcription factor that specifically binds heat shock promoter elements (HSE). Required for denucleation and organelle rupture and degradation that occur during eye lens terminal differentiation, when fiber cells that compose the lens degrade all membrane-bound organelles in order to provide lens with transparency to allow the passage of light. In this process, may regulate denucleation of lens fiber cells in part by activating DNASE2B transcription. May be involved in DNA repair through the transcriptional regulation of RAD51. May up-regulate p53/TP53 protein in eye lens fiber cells, possibly through protein stabilization. In the eye lens, controls the expression of alpha-crystallin B chain/CRYAB and consequently may be involved in the regulation of lysosomal acidification. In Canis lupus familiaris (Dog), this protein is Heat shock factor protein 4 (HSF4).